Consider the following 177-residue polypeptide: Large ribosomal subunit protein uL6 (177 aa).

This sequence belongs to the universal ribosomal protein uL6 family. Part of the 50S ribosomal subunit.

This protein binds to the 23S rRNA, and is important in its secondary structure. It is located near the subunit interface in the base of the L7/L12 stalk, and near the tRNA binding site of the peptidyltransferase center. In Stutzerimonas stutzeri (strain A1501) (Pseudomonas stutzeri), this protein is Large ribosomal subunit protein uL6.